The sequence spans 217 residues: Ran-binding protein 1 homolog b (217 aa).

2 disordered regions span residues 1 to 32 (MASI…QVAP) and 160 to 217 (ESEE…VPSA). Ala2 carries the post-translational modification N-acetylalanine. Residues 14-26 (DEEETGANEDEDT) are compositionally biased toward acidic residues. The RanBD1 domain occupies 29–164 (QVAPIVRLEE…FKEVAESEEE (136 aa)). Positions 181–217 (LTVEEKESEKKPVEKAEENKKSEAVEEKKTEESVPSA) are enriched in basic and acidic residues.

In terms of assembly, interacts with the GTP-bound form of RAN1, RAN2 and RAN3.

The protein resides in the nucleus. It is found in the nuclear pore complex. The chain is Ran-binding protein 1 homolog b (RANBP1B) from Arabidopsis thaliana (Mouse-ear cress).